Consider the following 700-residue polypeptide: Elongation factor G 1 (700 aa).

One can recognise a tr-type G domain in the interval 8–290 (ERYRNIGISA…AVIDYLPSPA (283 aa)). Residues 17–24 (AHIDAGKT), 88–92 (DTPGH), and 142–145 (NKMD) each bind GTP.

This sequence belongs to the TRAFAC class translation factor GTPase superfamily. Classic translation factor GTPase family. EF-G/EF-2 subfamily.

It is found in the cytoplasm. Functionally, catalyzes the GTP-dependent ribosomal translocation step during translation elongation. During this step, the ribosome changes from the pre-translocational (PRE) to the post-translocational (POST) state as the newly formed A-site-bound peptidyl-tRNA and P-site-bound deacylated tRNA move to the P and E sites, respectively. Catalyzes the coordinated movement of the two tRNA molecules, the mRNA and conformational changes in the ribosome. In Bordetella bronchiseptica (strain ATCC BAA-588 / NCTC 13252 / RB50) (Alcaligenes bronchisepticus), this protein is Elongation factor G 1.